The sequence spans 353 residues: Phospho-N-acetylmuramoyl-pentapeptide-transferase (353 aa).

10 consecutive transmembrane segments (helical) span residues 22 to 42, 65 to 85, 88 to 108, 129 to 149, 161 to 181, 192 to 212, 228 to 248, 256 to 276, 281 to 301, and 330 to 350; these read FAFF…ITWA, TPTM…LFCI, DNIF…IGLI, LLAQ…SSEL, PLFD…ISSS, GLAT…LYLS, GLGE…GFLW, VFMG…LAVI, ILLL…ILQV, and KIIV…LASI.

The protein belongs to the glycosyltransferase 4 family. MraY subfamily. Requires Mg(2+) as cofactor.

It localises to the cell inner membrane. It catalyses the reaction UDP-N-acetyl-alpha-D-muramoyl-L-alanyl-gamma-D-glutamyl-meso-2,6-diaminopimeloyl-D-alanyl-D-alanine + di-trans,octa-cis-undecaprenyl phosphate = di-trans,octa-cis-undecaprenyl diphospho-N-acetyl-alpha-D-muramoyl-L-alanyl-D-glutamyl-meso-2,6-diaminopimeloyl-D-alanyl-D-alanine + UMP. The protein operates within cell wall biogenesis; peptidoglycan biosynthesis. Functionally, catalyzes the initial step of the lipid cycle reactions in the biosynthesis of the cell wall peptidoglycan: transfers peptidoglycan precursor phospho-MurNAc-pentapeptide from UDP-MurNAc-pentapeptide onto the lipid carrier undecaprenyl phosphate, yielding undecaprenyl-pyrophosphoryl-MurNAc-pentapeptide, known as lipid I. The protein is Phospho-N-acetylmuramoyl-pentapeptide-transferase of Campylobacter jejuni subsp. jejuni serotype O:2 (strain ATCC 700819 / NCTC 11168).